We begin with the raw amino-acid sequence, 677 residues long: MGDSHVDTSSTVSEAVAEEVSLFSMTDMILFSLIVGLLTYWFLFRKKKEEVPEFTKIQTLTSSVRESSFVEKMKKTGRNIIVFYGSQTGTAEEFANRLSKDAHRYGMRGMSADPEEYDLADLSSLPEIDNALVVFCMATYGEGDPTDNAQDFYDWLQETDVDLSGVKFAVFGLGNKTYEHFNAMGKYVDKRLEQLGAQRIFELGLGDDDGNLEEDFITWREQFWPAVCEHFGVEATGEESSIRQYELVVHTDIDAAKVYMGEMGRLKSYENQKPPFDAKNPFLAAVTTNRKLNQGTERHLMHLELDISDSKIRYESGDHVAVYPANDSALVNQLGKILGADLDVVMSLNNLDEESNKKHPFPCPTSYRTALTYYLDITNPPRTNVLYELAQYASEPSEQELLRKMASSSGEGKELYLSWVVEARRHILAILQDCPSLRPPIDHLCELLPRLQARYYSIASSSKVHPNSVHICAVVVEYETKAGRINKGVATNWLRAKEPAGENGGRALVPMFVRKSQFRLPFKATTPVIMVGPGTGVAPFIGFIQERAWLRQQGKEVGETLLYYGCRRSDEDYLYREELAQFHRDGALTQLNVAFSREQSHKVYVQHLLKQDREHLWKLIEGGAHIYVCGDARNMARDVQNTFYDIVAELGAMEHAQAVDYIKKLMTKGRYSLDVWS.

Gly-2 carries the post-translational modification N-acetylglycine. Residues Gly-2–Ser-21 lie on the Lumenal side of the membrane. The chain crosses the membrane as a helical span at residues Leu-22 to Phe-42. The Cytoplasmic segment spans residues Leu-43–Ser-677. A Phosphoserine modification is found at Ser-63. The region spanning Ile-80–Trp-224 is the Flavodoxin-like domain. Residues Ser-86–Ala-91, Ala-138–Gly-141, Leu-173–Asn-182, and Asp-208 each bind FMN. Residues Lys-279–Pro-521 form the FAD-binding FR-type domain. Position 298 (Arg-298) interacts with NADP(+). Residues Arg-424, Arg-454–Ser-457, Cys-472–Val-474, Tyr-478, and Gly-488–Thr-491 each bind FAD. NADP(+)-binding positions include Thr-535, Ser-596–Arg-597, Lys-602–Gln-606, and Asp-638. Position 676 (Trp-676) interacts with FAD.

It belongs to the NADPH--cytochrome P450 reductase family. In the N-terminal section; belongs to the flavodoxin family. This sequence in the C-terminal section; belongs to the flavoprotein pyridine nucleotide cytochrome reductase family. Requires FAD as cofactor. It depends on FMN as a cofactor.

The protein resides in the endoplasmic reticulum membrane. It carries out the reaction 2 oxidized [cytochrome P450] + NADPH = 2 reduced [cytochrome P450] + NADP(+) + H(+). In terms of biological role, this enzyme is required for electron transfer from NADP to cytochrome P450 in microsomes. It can also provide electron transfer to heme oxygenase and cytochrome B5. This chain is NADPH--cytochrome P450 reductase, found in Homo sapiens (Human).